Consider the following 211-residue polypeptide: Uracil phosphoribosyltransferase (211 aa).

Residues R78, R103, and 130–138 (DPMLATGSS) contribute to the 5-phospho-alpha-D-ribose 1-diphosphate site. Residues I193 and 198–200 (GDA) contribute to the uracil site. D199 contributes to the 5-phospho-alpha-D-ribose 1-diphosphate binding site.

Belongs to the UPRTase family. Mg(2+) is required as a cofactor.

The enzyme catalyses UMP + diphosphate = 5-phospho-alpha-D-ribose 1-diphosphate + uracil. It participates in pyrimidine metabolism; UMP biosynthesis via salvage pathway; UMP from uracil: step 1/1. With respect to regulation, allosterically activated by GTP. Functionally, catalyzes the conversion of uracil and 5-phospho-alpha-D-ribose 1-diphosphate (PRPP) to UMP and diphosphate. This is Uracil phosphoribosyltransferase from Acinetobacter baylyi (strain ATCC 33305 / BD413 / ADP1).